A 376-amino-acid polypeptide reads, in one-letter code: MRSYTLLALAGPLAVSAASGSGHSTRYWDCCKPSCSWSGKAAVNAPALTCDKNDNPISNTNAVNGCEGGGSAYACTNYSPWAVNDELAYGFAATKISGGSEASWCCACYALTFTTGPVKGKKMIVQSTNTGGDLGDNHFDLMMPGGGVGIFDGCTSEFGKALGGAQYGGISSRSECDSYPELLKDGCHWRFDWFENADNPDFTFEQVQCPKALLDISGCKRDDDSSFPAFKGDTSASKPQPSSSAKKTTSAAAAAQPQKTKDSAPVVQKSSTKPAAQPEPTKPADKPQTDKPVATKPAATKPAQPVNKPKTTQKVRGTKTRGSCPAKTDATAKASVVPAYYQCGGSKSAYPNGNLACATGSKCVKQNEYYSQCVPN.

Positions 1 to 18 (MRSYTLLALAGPLAVSAA) are cleaved as a signal peptide. Positions 19–308 (SGSGHSTRYW…ATKPAQPVNK (290 aa)) are catalytic. Asp29 serves as the catalytic Nucleophile. Catalysis depends on Asp140, which acts as the Proton donor. The interval 229 to 332 (AFKGDTSASK…SCPAKTDATA (104 aa)) is disordered. 2 stretches are compositionally biased toward low complexity: residues 235 to 258 (SASK…AQPQ) and 291 to 306 (KPVA…AQPV). The interval 309 to 338 (PKTTQKVRGTKTRGSCPAKTDATAKASVVP) is linker. The CBM1 domain occupies 335–374 (SVVPAYYQCGGSKSAYPNGNLACATGSKCVKQNEYYSQCV).

The protein belongs to the glycosyl hydrolase 45 (cellulase K) family.

The catalysed reaction is Endohydrolysis of (1-&gt;4)-beta-D-glucosidic linkages in cellulose, lichenin and cereal beta-D-glucans.. The protein is Putative endoglucanase type K of Fusarium oxysporum (Fusarium vascular wilt).